Reading from the N-terminus, the 224-residue chain is Claudin-19 (224 aa).

The Cytoplasmic portion of the chain corresponds to 1–7; sequence MANSGLQ. The helical transmembrane segment at 8–28 threads the bilayer; that stretch reads LLGYFLALGGWVGIIASTALP. Topologically, residues 29 to 81 are extracellular; that stretch reads QWKQSSYAGDAIITAVGLYEGLWMSCASQSTGQVQCKLYDSLLALDGHIQSAR. Residues Cys-54 and Cys-64 are joined by a disulfide bond. The chain crosses the membrane as a helical span at residues 82–102; it reads ALMVVAVLLGFVAMVLSVVGM. Residues 103–117 lie on the Cytoplasmic side of the membrane; it reads KCTRVGDSNPTAKGR. Residues 118–138 traverse the membrane as a helical segment; that stretch reads VAISGGALFLLAGLCTLTAVS. Residues 139-160 are Extracellular-facing; the sequence is WYATLVTQEFFNPSTPVNARYE. Residues 161-181 traverse the membrane as a helical segment; the sequence is FGPALFVGWASAGLAILGGSF. Topologically, residues 182 to 224 are cytoplasmic; that stretch reads LCCTCPEPERANSIPQPYRSGPSTAAREPVVKLSTSVKGPLGV.

This sequence belongs to the claudin family. As to quaternary structure, can form homo- and heteropolymeric tight junction strands. Interacts with other claudins including CLDN3, CLDN10, CLDN16 and CLDN18 with highest affinity for CLDN16. Interacts (via PDZ-binding motif TRV) with TJP1 (via PDZ domain).

It is found in the cell junction. Its subcellular location is the tight junction. The protein resides in the cell membrane. It catalyses the reaction Mg(2+)(in) = Mg(2+)(out). The catalysed reaction is Ca(2+)(in) = Ca(2+)(out). The enzyme catalyses Na(+)(in) = Na(+)(out). It carries out the reaction K(+)(in) = K(+)(out). It catalyses the reaction Rb(+)(in) = Rb(+)(out). The catalysed reaction is Cs(+)(in) = Cs(+)(out). The enzyme catalyses Li(+)(in) = Li(+)(out). In terms of biological role, forms paracellular channels: coassembles with CLDN16 into tight junction strands with cation-selective channels through the strands, conveying epithelial permeability in a process known as paracellular tight junction permeability. Involved in the maintenance of ion gradients along the nephron. In the thick ascending limb (TAL) of Henle's loop, facilitates sodium paracellular permeability from the interstitial compartment to the lumen, contributing to the lumen-positive transepithelial potential that drives paracellular magnesium and calcium reabsorption. Forms paracellular barriers on its own. In the peripheral nervous system, represents a major constituent of the tight junctions in Schwann cells and contributes to electrical sealing. During retinal neurogenesis, may regulate the barrier properties of tight junctions in retinal pigment epithelium, required for proper retinal tissue differentiation and vision. The chain is Claudin-19 from Rattus norvegicus (Rat).